The primary structure comprises 305 residues: Coenzyme PQQ synthesis protein B (305 aa).

It belongs to the PqqB family.

Its pathway is cofactor biosynthesis; pyrroloquinoline quinone biosynthesis. May be involved in the transport of PQQ or its precursor to the periplasm. The protein is Coenzyme PQQ synthesis protein B of Methylobacillus flagellatus (strain ATCC 51484 / DSM 6875 / VKM B-1610 / KT).